The chain runs to 302 residues: Probable alpha-L-glutamate ligase 1 (302 aa).

The 184-residue stretch at 104–287 (MQLLSRKGIG…VANMIIEFIE (184 aa)) folds into the ATP-grasp domain. ATP-binding positions include lysine 141, 178–179 (EY), aspartate 187, and 211–213 (RSN). Residues aspartate 248, glutamate 260, and asparagine 262 each coordinate Mg(2+). Aspartate 248, glutamate 260, and asparagine 262 together coordinate Mn(2+).

It belongs to the RimK family. Mg(2+) is required as a cofactor. The cofactor is Mn(2+).

The polypeptide is Probable alpha-L-glutamate ligase 1 (Pseudoalteromonas atlantica (strain T6c / ATCC BAA-1087)).